The primary structure comprises 93 residues: Small ribosomal subunit protein uS19 (93 aa).

This sequence belongs to the universal ribosomal protein uS19 family.

Its function is as follows. Protein S19 forms a complex with S13 that binds strongly to the 16S ribosomal RNA. The chain is Small ribosomal subunit protein uS19 from Microcystis aeruginosa (strain NIES-843 / IAM M-2473).